The following is a 366-amino-acid chain: MQVKDQLSSLQPYKPGKSPEQMKEVYGDHSFVKLASNENPFGCSPRVLDELQKSWLDHALYPDGGATTLRQTIANKLHVKMEQVLCGSGLDEVIQMISRAVLKAGDNIVTAGATFPQYRHHAIIEGCEVKEVALNNGVYDLDEISSVVDNDTKIVWICNPNNPTGTYVNDRKLTQFIEGISENTLIVIDEAYYEYVTAKDFPETLPLLEKHKNILVLRTFSKAYGLASFRVGYAVGHEELIEKLNVVRLPFNVSSLAQKAATIAFGDDEFIEEIVRVNTEGLRQYESFCKENEIPFYQSQTNFIFLPVENGGEIYEACAHAGFIIRPFPNGVRITVGTREQNEGVISVLQQHFENKKRKSRDEANA.

Residues 1-11 show a composition bias toward polar residues; it reads MQVKDQLSSLQ. The disordered stretch occupies residues 1–21; the sequence is MQVKDQLSSLQPYKPGKSPEQ. K222 bears the N6-(pyridoxal phosphate)lysine mark.

Belongs to the class-II pyridoxal-phosphate-dependent aminotransferase family. Histidinol-phosphate aminotransferase subfamily. Homodimer. It depends on pyridoxal 5'-phosphate as a cofactor.

It catalyses the reaction L-histidinol phosphate + 2-oxoglutarate = 3-(imidazol-4-yl)-2-oxopropyl phosphate + L-glutamate. It functions in the pathway amino-acid biosynthesis; L-histidine biosynthesis; L-histidine from 5-phospho-alpha-D-ribose 1-diphosphate: step 7/9. The polypeptide is Histidinol-phosphate aminotransferase 2 (hisC2) (Bacillus anthracis).